The chain runs to 508 residues: UBX domain-containing protein 4 (508 aa).

The interaction with UBQLN1 stretch occupies residues 1 to 200 (MLWFQGAIPA…PAEDLNIRVE (200 aa)). The Cytoplasmic segment spans residues 1–413 (MLWFQGAIPA…VHSSSGDIWT (413 aa)). 2 stretches are compositionally biased toward polar residues: residues 117–151 (SETS…QSRN) and 160–187 (TSDT…SGCS). The disordered stretch occupies residues 117-196 (SETSVANGSQ…SDQRPAEDLN (80 aa)). Positions 315 to 393 (ERSTVARIQF…ELAPSASVVV (79 aa)) constitute a UBX domain. Residues 414–434 (LLGTVLYPFLAIWRLISNFLF) lie within the membrane without spanning it. Residues 435 to 508 (SNPPPTQTSV…TWNGNSTQQM (74 aa)) are Cytoplasmic-facing. Positions 440–508 (TQTSVRVTSS…TWNGNSTQQM (69 aa)) are disordered. Residues 441 to 458 (QTSVRVTSSEPPNPASSS) are compositionally biased toward polar residues. A compositionally biased stretch (basic and acidic residues) spans 459–491 (KSEKREPVRKRVLEKRGDDFKKEGKIYRLRTQD). Residue T489 is modified to Phosphothreonine. The span at 498–508 (NTWNGNSTQQM) shows a compositional bias: polar residues.

In terms of assembly, directly interacts with VCP. Interacts with UBQLN1. Forms a complex with VCP and UBQLN1.

It localises to the endoplasmic reticulum membrane. It is found in the nucleus envelope. Involved in endoplasmic reticulum-associated protein degradation (ERAD). Acts as a platform to recruit both UBQLN1 and VCP to the ER during ERAD. The sequence is that of UBX domain-containing protein 4 (UBXN4) from Pongo abelii (Sumatran orangutan).